Reading from the N-terminus, the 419-residue chain is MPYLFTSESVSEGHPDKVADQISDALIDHFLAFDPNAKVACETLVTTGQVVLAGEVKSKAYLDVQEIAREVIRKIGYTKSEYMFEANSCGIFSAIHEQSADINQGVDRKKKEEQGAGDQGMMFGYATNETNDYMPLALDLAHKLLIELAALRREGKQIKYLRPDAKSQVTLEYDDNNRPVRIDAIVLSTQHDDFDTEEKMHKKIEKDIVSILIPRIVSKYPKYKKFFDGKTKIKYHINPTGKFVIGGPHGDTGLTGRKIIVDTYGGKGAHGGGAFSGKDPSKVDRSAAYATRHIAKNLVAAGLCDEVLVQVSYAIGVAKPMGIYVNTYGTAKVKKNDGEIAKIVEKLFDMRPYAIEQRLQLRNPIYSETAAYGHMGRKPETVTKSFKSNDGKIIKKKVELFTWEKLDYVDKVRKAFGIK.

His-14 serves as a coordination point for ATP. Asp-16 provides a ligand contact to Mg(2+). A K(+)-binding site is contributed by Glu-42. Residues Glu-55 and Gln-98 each contribute to the L-methionine site. Residues 98-108 (QSADINQGVDR) are flexible loop. ATP-binding positions include 164–166 (DAK), 242–243 (KF), Asp-251, 257–258 (RK), Ala-274, and Lys-278. L-methionine is bound at residue Asp-251. Position 282 (Lys-282) interacts with L-methionine.

The protein belongs to the AdoMet synthase family. Homotetramer; dimer of dimers. Mg(2+) is required as a cofactor. Requires K(+) as cofactor.

Its subcellular location is the cytoplasm. It catalyses the reaction L-methionine + ATP + H2O = S-adenosyl-L-methionine + phosphate + diphosphate. It functions in the pathway amino-acid biosynthesis; S-adenosyl-L-methionine biosynthesis; S-adenosyl-L-methionine from L-methionine: step 1/1. Functionally, catalyzes the formation of S-adenosylmethionine (AdoMet) from methionine and ATP. The overall synthetic reaction is composed of two sequential steps, AdoMet formation and the subsequent tripolyphosphate hydrolysis which occurs prior to release of AdoMet from the enzyme. The polypeptide is S-adenosylmethionine synthase (Cytophaga hutchinsonii (strain ATCC 33406 / DSM 1761 / CIP 103989 / NBRC 15051 / NCIMB 9469 / D465)).